Consider the following 95-residue polypeptide: Pyrimidine/purine nucleoside phosphorylase (95 aa).

It belongs to the nucleoside phosphorylase PpnP family.

The enzyme catalyses a purine D-ribonucleoside + phosphate = a purine nucleobase + alpha-D-ribose 1-phosphate. It carries out the reaction adenosine + phosphate = alpha-D-ribose 1-phosphate + adenine. It catalyses the reaction cytidine + phosphate = cytosine + alpha-D-ribose 1-phosphate. The catalysed reaction is guanosine + phosphate = alpha-D-ribose 1-phosphate + guanine. The enzyme catalyses inosine + phosphate = alpha-D-ribose 1-phosphate + hypoxanthine. It carries out the reaction thymidine + phosphate = 2-deoxy-alpha-D-ribose 1-phosphate + thymine. It catalyses the reaction uridine + phosphate = alpha-D-ribose 1-phosphate + uracil. The catalysed reaction is xanthosine + phosphate = alpha-D-ribose 1-phosphate + xanthine. Functionally, catalyzes the phosphorolysis of diverse nucleosides, yielding D-ribose 1-phosphate and the respective free bases. Can use uridine, adenosine, guanosine, cytidine, thymidine, inosine and xanthosine as substrates. Also catalyzes the reverse reactions. The chain is Pyrimidine/purine nucleoside phosphorylase from Yersinia enterocolitica serotype O:8 / biotype 1B (strain NCTC 13174 / 8081).